The following is a 460-amino-acid chain: MTSPSTSKNHRCLNLISKCKSLQNLKQIHAQIITIGLSHHTYPLSKLLHLSSTVCLSYALSILRQIPNPSVFLYNTLISSIVSNHNSTQTHLAFSLYDQILSSRSNFVRPNEFTYPSLFKASGFDAQWHRHGRALHAHVLKFLEPVNHDRFVQAALVGFYANCGKLREARSLFERIREPDLATWNTLLAAYANSEEIDSDEEVLLLFMRMQVRPNELSLVALIKSCANLGEFVRGVWAHVYVLKNNLTLNQFVGTSLIDLYSKCGCLSFARKVFDEMSQRDVSCYNAMIRGLAVHGFGQEGIELYKSLISQGLVPDSATFVVTISACSHSGLVDEGLQIFNSMKAVYGIEPKVEHYGCLVDLLGRSGRLEEAEECIKKMPVKPNATLWRSFLGSSQTHGDFERGEIALKHLLGLEFENSGNYVLLSNIYAGVNRWTDVEKTRELMKDHRVNKSPGISTLN.

PPR repeat units lie at residues 70 to 107 (SVFL…RSNF), 111 to 142 (NEFT…VLKF), 149 to 179 (DRFV…IREP), 180 to 214 (DLAT…QVRP), 215 to 249 (NELS…NLTL), 250 to 280 (NQFV…MSQR), 281 to 315 (DVSC…GLVP), 316 to 351 (DSAT…GIEP), and 352 to 382 (KVEH…MPVK). A type E motif; degenerate region spans residues 387 to 460 (LWRSFLGSSQ…NKSPGISTLN (74 aa)).

It belongs to the PPR family. PCMP-E subfamily.

The polypeptide is Pentatricopeptide repeat-containing protein At5g43790 (PCMP-E30) (Arabidopsis thaliana (Mouse-ear cress)).